Reading from the N-terminus, the 70-residue chain is U2-agatoxin-Ao1a (70 aa).

Residues 1 to 20 (MRAIISLFLISAMVFSMIQA) form the signal peptide. A propeptide spanning residues 21–34 (VPEEEGLQLSEDER) is cleaved from the precursor. Cystine bridges form between Cys-37/Cys-53, Cys-44/Cys-58, and Cys-52/Cys-68. Leu-69 is modified (leucine amide).

The protein belongs to the neurotoxin 01 (U2-agtx) family. As to expression, expressed by the venom gland.

The protein resides in the secreted. In terms of biological role, insect active toxin causing rapid but reversible paralysis in crickets. No activity shown in mammals. Suppresses the excitatory postsynaptic potentials evoked in lobster neuromuscular synaptic preparations, possibly by blocking the presynaptic calcium channel. Induces instantaneous reversible paralysis when injected into crickets. Does not show effect on mammalian Cav2.1/CACNA1A, Cav2.2/CACNA1B and Cav2.3/CACNA1E. The protein is U2-agatoxin-Ao1a of Agelena orientalis (Funnel-web spider).